A 185-amino-acid polypeptide reads, in one-letter code: Ethylene-responsive transcription factor ERF017 (185 aa).

Residues 11-68 (KYKGVRKRKWGKWVSEIRLPNSRERIWLGSYDTPEKAARAFDAALYCLRGNNAKFNFP) constitute a DNA-binding region (AP2/ERF).

It belongs to the AP2/ERF transcription factor family. ERF subfamily.

The protein localises to the nucleus. In terms of biological role, probably acts as a transcriptional activator. Binds to the GCC-box pathogenesis-related promoter element. May be involved in the regulation of gene expression by stress factors and by components of stress signal transduction pathways. The polypeptide is Ethylene-responsive transcription factor ERF017 (ERF017) (Arabidopsis thaliana (Mouse-ear cress)).